The chain runs to 413 residues: Interferon-inducible GTPase 1 (413 aa).

Residue Gly2 is the site of N-myristoyl glycine attachment. Residues Ser68–Asp250 enclose the IRG-type G domain. GDP is bound by residues Gly79, Gly81, Lys82, Ser83, Ser84, Thr102, and Gly103. At Thr102 the chain carries (Microbial infection) Phosphothreonine; by ROP18. A (Microbial infection) Phosphothreonine; by ROP18 modification is found at Thr108. Residues Lys184, Asp186, Ser187, and Asn232 each contribute to the GDP site. A disulfide bond links Cys236 and Cys410.

It belongs to the TRAFAC class dynamin-like GTPase superfamily. IRG family. As to quaternary structure, monomer, as apoenzyme and in the GDP-bound form. Homooligomer, upon GTP binding. Interacts with HOOK3. (Microbial infection) Interacts with Toxoplasma gondii GRA7 in GTP-dependent manner; the interaction results in faster turnover of the GTP-activated IIGP1 oligomer. Interacts with T.gondii ROP5; the interaction results in inhibition of IRGA6/IIGP1 GTPase activity and oligomerization. Myristoylated. In terms of processing, (Microbial infection) Phosphorylated by Toxoplasma gondii ROP18 from virulent strains.

The protein resides in the cytoplasm. The protein localises to the nucleus membrane. Its subcellular location is the endoplasmic reticulum membrane. It localises to the golgi apparatus. It is found in the golgi stack membrane. The protein resides in the parasitophorous vacuole membrane. The enzyme catalyses GTP + H2O = GDP + phosphate + H(+). GTPase with low activity. Has higher affinity for GDP than for GTP. Plays a role in resistance to intracellular pathogens. During infection with avirulent Toxoplasma gondii strains, recruited to the parasitophorous vacuole membrane. Required for disruption of the parasitophorous vacuole formed following T.gondii infection and subsequent killing of the parasite. Mediates resistance to Chlamydia trachomatis infection by targeting bacterial inclusions to autophagosomes for subsequent lysosomal destruction. The polypeptide is Interferon-inducible GTPase 1 (Iigp1) (Mus musculus (Mouse)).